We begin with the raw amino-acid sequence, 277 residues long: Probable endonuclease 4 (277 aa).

Zn(2+) is bound by residues H67, H107, E141, D173, H176, H210, D223, H225, and E255.

This sequence belongs to the AP endonuclease 2 family. The cofactor is Zn(2+).

It carries out the reaction Endonucleolytic cleavage to 5'-phosphooligonucleotide end-products.. Its function is as follows. Endonuclease IV plays a role in DNA repair. It cleaves phosphodiester bonds at apurinic or apyrimidinic (AP) sites, generating a 3'-hydroxyl group and a 5'-terminal sugar phosphate. The sequence is that of Probable endonuclease 4 from Haloarcula marismortui (strain ATCC 43049 / DSM 3752 / JCM 8966 / VKM B-1809) (Halobacterium marismortui).